Reading from the N-terminus, the 199-residue chain is MNEYIESCHREKHTYDEEGVREAVRLFLKSIGEDPEREGLVETPDRIARACRELFTGLQASPADALEKHFDVDTDELVLVKDIELYSVCEHHLLPFHGVAHVGYIPAKDGVMGLSKLARLVEVYARRPQVQERLTQQIADALVEYAGARGVIVVTECEHLCMSMRGIKKSSARTVTSAVRGMLRNPATRAEAMSLILDK.

Residues Cys-89, His-92, and Cys-161 each contribute to the Zn(2+) site.

It belongs to the GTP cyclohydrolase I family. In terms of assembly, toroid-shaped homodecamer, composed of two pentamers of five dimers.

The enzyme catalyses GTP + H2O = 7,8-dihydroneopterin 3'-triphosphate + formate + H(+). It functions in the pathway cofactor biosynthesis; 7,8-dihydroneopterin triphosphate biosynthesis; 7,8-dihydroneopterin triphosphate from GTP: step 1/1. The protein is GTP cyclohydrolase 1 of Bifidobacterium longum (strain NCC 2705).